The primary structure comprises 1087 residues: Error-prone DNA polymerase 3 (1087 aa).

The disordered stretch occupies residues 1040 to 1064 (AGRGDEFAHGSPGSSDTRDKSKPVV).

It belongs to the DNA polymerase type-C family. DnaE2 subfamily.

It is found in the cytoplasm. It carries out the reaction DNA(n) + a 2'-deoxyribonucleoside 5'-triphosphate = DNA(n+1) + diphosphate. Functionally, DNA polymerase involved in damage-induced mutagenesis and translesion synthesis (TLS). It is not the major replicative DNA polymerase. The polypeptide is Error-prone DNA polymerase 3 (Agrobacterium fabrum (strain C58 / ATCC 33970) (Agrobacterium tumefaciens (strain C58))).